A 632-amino-acid polypeptide reads, in one-letter code: Probable potassium transport system protein Kup (632 aa).

A run of 12 helical transmembrane segments spans residues L19–L39, I59–V79, L110–P130, P146–I166, F178–V198, L221–Y241, W256–L276, M298–F318, I346–F366, A375–M395, P403–A423, and I428–T448.

Belongs to the HAK/KUP transporter (TC 2.A.72) family.

The protein localises to the cell inner membrane. It catalyses the reaction K(+)(in) + H(+)(in) = K(+)(out) + H(+)(out). Its function is as follows. Transport of potassium into the cell. Likely operates as a K(+):H(+) symporter. The chain is Probable potassium transport system protein Kup from Cupriavidus metallidurans (strain ATCC 43123 / DSM 2839 / NBRC 102507 / CH34) (Ralstonia metallidurans).